We begin with the raw amino-acid sequence, 391 residues long: 23S rRNA (uracil(747)-C(5))-methyltransferase RlmC (391 aa).

[4Fe-4S] cluster contacts are provided by C5, C13, C16, and C95. S-adenosyl-L-methionine is bound by residues Q220, F249, E276, and N322. C349 serves as the catalytic Nucleophile.

This sequence belongs to the class I-like SAM-binding methyltransferase superfamily. RNA M5U methyltransferase family. RlmC subfamily.

It carries out the reaction uridine(747) in 23S rRNA + S-adenosyl-L-methionine = 5-methyluridine(747) in 23S rRNA + S-adenosyl-L-homocysteine + H(+). Functionally, catalyzes the formation of 5-methyl-uridine at position 747 (m5U747) in 23S rRNA. The protein is 23S rRNA (uracil(747)-C(5))-methyltransferase RlmC of Actinobacillus pleuropneumoniae serotype 5b (strain L20).